Consider the following 90-residue polypeptide: Putative regulatory protein cce_4590 (90 aa).

Belongs to the RemA family.

This Crocosphaera subtropica (strain ATCC 51142 / BH68) (Cyanothece sp. (strain ATCC 51142)) protein is Putative regulatory protein cce_4590.